Reading from the N-terminus, the 339-residue chain is Polyhydroxybutyrate depolymerase (339 aa).

The N-terminal stretch at 1–20 is a signal peptide; sequence MFDSVKIAWLVALGAAQVAA. Ser39 is an active-site residue. A disulfide bond links Cys70 and Cys79. Asp121 is a catalytic residue. Asn144 is a glycosylation site (N-linked (GlcNAc...) asparagine). His155 is a catalytic residue. Intrachain disulfides connect Cys169/Cys180, Cys234/Cys241, and Cys250/Cys304. Trp307 is a binding site for (3R)-hydroxybutanoate trimer.

Belongs to the carbohydrate esterase 1 (CE1) family.

It is found in the secreted. It catalyses the reaction [(3R)-hydroxybutanoate](n) + H2O = [(3R)-hydroxybutanoate](n-1) + (R)-3-hydroxybutanoate + H(+). The enzyme is completely inhibited by dithiothreitol (DTT) and diisopropylfluorophosphate (DFP), and partially inhibited by HgCl(2) and by enzyme3-(p-nitrophenoxy)propane (EPNP). Activity is not affected by N-ethylmaleimide (NEM) or phenylmethylsulfonyl fluoride (PMSF). Its function is as follows. Esterase involved in the hydrolysis of polyhydroxybutyrate, a microbial polyester that can be produced from renewable resources. This is Polyhydroxybutyrate depolymerase from Talaromyces funiculosus (Fruitlet core rot fungus).